A 355-amino-acid chain; its full sequence is Putative early 40.3 kDa protein (355 aa).

Its function is as follows. This protein is required for viral late gene expression. This chain is Putative early 40.3 kDa protein (DA41), found in Orgyia pseudotsugata multicapsid polyhedrosis virus (OpMNPV).